Here is a 555-residue protein sequence, read N- to C-terminus: Potassium-transporting ATPase potassium-binding subunit (555 aa).

A run of 10 helical transmembrane segments spans residues 2 to 22 (IWVAVVITMLLFILVAKPTGI), 60 to 80 (QYALSLVLLNGFMIVVVYFIF), 130 to 150 (IGITFLMFAAPATTLALVMAF), 173 to 193 (VFLPIAFIAALVFVALGVPQT), 246 to 266 (MSNILQMMLMMLLPTALPFTY), 278 to 298 (ILFVSLFMVFLLGFITITTSE), 374 to 394 (AGFVNIIMYAIIAVFISGLMV), 412 to 432 (LIAVTILFHPLLILGFSALAL), 483 to 503 (LVMFLGRYFSLITMLAVAASL), and 525 to 545 (GIFIGTIVIVGALTFFPMLVL).

It belongs to the KdpA family. As to quaternary structure, the system is composed of three essential subunits: KdpA, KdpB and KdpC.

It is found in the cell membrane. Functionally, part of the high-affinity ATP-driven potassium transport (or Kdp) system, which catalyzes the hydrolysis of ATP coupled with the electrogenic transport of potassium into the cytoplasm. This subunit binds the extracellular potassium ions and delivers the ions to the membrane domain of KdpB through an intramembrane tunnel. This chain is Potassium-transporting ATPase potassium-binding subunit, found in Bacillus cereus (strain 03BB102).